We begin with the raw amino-acid sequence, 65 residues long: Large ribosomal subunit protein bL35 (65 aa).

The disordered stretch occupies residues 1 to 26 (MPKIKTVRGAAKRFKKTASGGFKRKQ). Over residues 10-26 (AAKRFKKTASGGFKRKQ) the composition is skewed to basic residues.

It belongs to the bacterial ribosomal protein bL35 family.

This is Large ribosomal subunit protein bL35 from Haemophilus ducreyi (strain 35000HP / ATCC 700724).